A 79-amino-acid chain; its full sequence is Acyl carrier protein (79 aa).

In terms of domain architecture, Carrier spans 2–77 (SDIEARVKKI…NAIDYANTHQ (76 aa)). An O-(pantetheine 4'-phosphoryl)serine modification is found at Ser-37.

Belongs to the acyl carrier protein (ACP) family. Post-translationally, 4'-phosphopantetheine is transferred from CoA to a specific serine of apo-ACP by AcpS. This modification is essential for activity because fatty acids are bound in thioester linkage to the sulfhydryl of the prosthetic group.

The protein localises to the cytoplasm. It functions in the pathway lipid metabolism; fatty acid biosynthesis. Its function is as follows. Carrier of the growing fatty acid chain in fatty acid biosynthesis. The sequence is that of Acyl carrier protein from Paracidovorax citrulli (strain AAC00-1) (Acidovorax citrulli).